Consider the following 208-residue polypeptide: Negative modulator of initiation of replication (208 aa).

The segment at Ala115 to Val116 is interaction with DNA.

Belongs to the SeqA family. In terms of assembly, homodimer. Polymerizes to form helical filaments.

The protein localises to the cytoplasm. Functionally, negative regulator of replication initiation, which contributes to regulation of DNA replication and ensures that replication initiation occurs exactly once per chromosome per cell cycle. Binds to pairs of hemimethylated GATC sequences in the oriC region, thus preventing assembly of replication proteins and re-initiation at newly replicated origins. Repression is relieved when the region becomes fully methylated. The sequence is that of Negative modulator of initiation of replication from Shewanella frigidimarina (strain NCIMB 400).